Here is a 131-residue protein sequence, read N- to C-terminus: Small ribosomal subunit protein uS8 (131 aa).

The protein belongs to the universal ribosomal protein uS8 family. Part of the 30S ribosomal subunit. Contacts proteins S5 and S12.

In terms of biological role, one of the primary rRNA binding proteins, it binds directly to 16S rRNA central domain where it helps coordinate assembly of the platform of the 30S subunit. In Acinetobacter baylyi (strain ATCC 33305 / BD413 / ADP1), this protein is Small ribosomal subunit protein uS8.